A 247-amino-acid chain; its full sequence is Probable transcriptional regulatory protein lpl1249 (247 aa).

The protein belongs to the TACO1 family.

Its subcellular location is the cytoplasm. This is Probable transcriptional regulatory protein lpl1249 from Legionella pneumophila (strain Lens).